We begin with the raw amino-acid sequence, 745 residues long: Putative cryptochrome DASH, mitochondrial (745 aa).

The transit peptide at 1-22 (MAPSKVVIYAMRRELRLSDNPI) directs the protein to the mitochondrion. In terms of domain architecture, Photolyase/cryptochrome alpha/beta spans 23–166 (FHHLSNPESK…DFKLWDDEKY (144 aa)). Disordered stretches follow at residues 563-688 (KFNL…GGGG) and 702-745 (GGYR…QTDA). Positions 571–584 (SKVKKRPFFRKRGT) are enriched in basic residues. Over residues 591 to 603 (GSAESPGSSDSHS) the composition is skewed to low complexity. The span at 604–616 (GSGGSPDGSGGGN) shows a compositional bias: gly residues. A compositionally biased stretch (low complexity) spans 632–648 (QQTHQGSGRSQSSSNHG). Composition is skewed to gly residues over residues 672–688 (RGGGGGRGGRGGRGGGG) and 702–718 (GGYRGGGRGRGGGGGFR). Over residues 735–745 (QQVASQFQTDA) the composition is skewed to polar residues.

It belongs to the DNA photolyase class-1 family. FAD is required as a cofactor. Requires (6R)-5,10-methylene-5,6,7,8-tetrahydrofolate as cofactor.

The protein localises to the mitochondrion. Functionally, may have a photoreceptor function. In Neurospora crassa (strain ATCC 24698 / 74-OR23-1A / CBS 708.71 / DSM 1257 / FGSC 987), this protein is Putative cryptochrome DASH, mitochondrial (cry).